The following is a 702-amino-acid chain: MA3 DOMAIN-CONTAINING TRANSLATION REGULATORY FACTOR 3 (702 aa).

A disordered region spans residues 1 to 100; the sequence is MEGFLTDQQR…PNDPNYDSGE (100 aa). Residues 53–65 show a composition bias toward basic residues; sequence VKHRRSHAGRSIR. Residues 81–91 show a composition bias toward basic and acidic residues; it reads IDTDGDYHIDP. One can recognise an MI 1 domain in the interval 116–237; the sequence is DYKKAAASII…PPAFLPRAAK (122 aa). Positions 267–274 match the Nuclear localization signal 1 motif; the sequence is ERRWGGQT. MI domains lie at 280 to 401, 414 to 535, and 577 to 697; these read EVKK…PSGE, RFKE…EISS, and DAKD…SLTE. The short motif at 615–622 is the Nuclear localization signal 2 element; that stretch reads VKKALVMG.

This sequence belongs to the PDCD4 family. Interacts with EIN2, ETR2 and EIN4. Binds to EIF4A1. The association with ribosomes is modulated by cellular energy status and TOR activity. In terms of tissue distribution, mostly expressed in vegetative tissues, such as leaves and stems, and, to a lower extent, in roots and reproductive tissues, such as flower buds and flowers. Expressed in seedlings, roots, cauline leaf tips and flowers.

The protein localises to the nucleus. It localises to the cytoplasm. Its subcellular location is the cytosol. In terms of biological role, involved in target of rapamycin (TOR)-regulated translation control, especially under energy-deficient conditions. Involved in the regulation of the ethylene-mediated signaling pathway. Involved in salt stress responses. Reduced cotyledons size and early flowering. This chain is MA3 DOMAIN-CONTAINING TRANSLATION REGULATORY FACTOR 3, found in Arabidopsis thaliana (Mouse-ear cress).